The following is a 92-amino-acid chain: Small ribosomal subunit protein uS19 (92 aa).

Belongs to the universal ribosomal protein uS19 family.

Functionally, protein S19 forms a complex with S13 that binds strongly to the 16S ribosomal RNA. The protein is Small ribosomal subunit protein uS19 of Rhodopseudomonas palustris (strain BisA53).